The following is a 165-amino-acid chain: uncharacterized protein (165 aa).

Residues 28 to 139 (QNALKDTGLA…KPNEREEAVK (112 aa)) form the Cupin type-1 domain.

This is an uncharacterized protein from Bacillus subtilis (strain 168).